The following is a 186-amino-acid chain: MKLIAGLGNPGKKYERTRHNVGFMVVDELSFRHQTPWKKSKFNGMTSEIIVGGEKMILVKPLTFMNASGECIRPLMDYYNIPIEDVVIVYDDLDLPVGKIRLRQKGSAGGHNGMKSIIQHVKTQEFNRIRVGVSRPLKGEVIHYVLGDFPKAEQPDIIAAIQKSADAIEDYAQTPFIEVMNKYNQK.

Tyr-14 is a tRNA binding site. His-19 (proton acceptor) is an active-site residue. Positions 64, 66, and 112 each coordinate tRNA.

The protein belongs to the PTH family. As to quaternary structure, monomer.

The protein localises to the cytoplasm. The catalysed reaction is an N-acyl-L-alpha-aminoacyl-tRNA + H2O = an N-acyl-L-amino acid + a tRNA + H(+). Hydrolyzes ribosome-free peptidyl-tRNAs (with 1 or more amino acids incorporated), which drop off the ribosome during protein synthesis, or as a result of ribosome stalling. Its function is as follows. Catalyzes the release of premature peptidyl moieties from peptidyl-tRNA molecules trapped in stalled 50S ribosomal subunits, and thus maintains levels of free tRNAs and 50S ribosomes. In Listeria monocytogenes serotype 4a (strain HCC23), this protein is Peptidyl-tRNA hydrolase.